Here is a 345-residue protein sequence, read N- to C-terminus: Phosphoribosylformylglycinamidine cyclo-ligase (345 aa).

The protein belongs to the AIR synthase family.

It is found in the cytoplasm. The catalysed reaction is 2-formamido-N(1)-(5-O-phospho-beta-D-ribosyl)acetamidine + ATP = 5-amino-1-(5-phospho-beta-D-ribosyl)imidazole + ADP + phosphate + H(+). Its pathway is purine metabolism; IMP biosynthesis via de novo pathway; 5-amino-1-(5-phospho-D-ribosyl)imidazole from N(2)-formyl-N(1)-(5-phospho-D-ribosyl)glycinamide: step 2/2. This Klebsiella pneumoniae (strain 342) protein is Phosphoribosylformylglycinamidine cyclo-ligase.